We begin with the raw amino-acid sequence, 141 residues long: Nucleoside diphosphate kinase (141 aa).

ATP-binding residues include lysine 11, phenylalanine 59, arginine 87, threonine 93, arginine 104, and asparagine 114. The Pros-phosphohistidine intermediate role is filled by histidine 117.

It belongs to the NDK family. In terms of assembly, homotetramer. Mg(2+) serves as cofactor.

It localises to the cytoplasm. It carries out the reaction a 2'-deoxyribonucleoside 5'-diphosphate + ATP = a 2'-deoxyribonucleoside 5'-triphosphate + ADP. The catalysed reaction is a ribonucleoside 5'-diphosphate + ATP = a ribonucleoside 5'-triphosphate + ADP. Functionally, major role in the synthesis of nucleoside triphosphates other than ATP. The ATP gamma phosphate is transferred to the NDP beta phosphate via a ping-pong mechanism, using a phosphorylated active-site intermediate. The polypeptide is Nucleoside diphosphate kinase (Methylibium petroleiphilum (strain ATCC BAA-1232 / LMG 22953 / PM1)).